We begin with the raw amino-acid sequence, 92 residues long: Signal recognition particle 19 kDa protein (92 aa).

This sequence belongs to the SRP19 family. In terms of assembly, part of the signal recognition particle protein translocation system, which is composed of SRP and FtsY. Archaeal SRP consists of a 7S RNA molecule of 300 nucleotides and two protein subunits: SRP54 and SRP19.

It localises to the cytoplasm. Functionally, involved in targeting and insertion of nascent membrane proteins into the cytoplasmic membrane. Binds directly to 7S RNA and mediates binding of the 54 kDa subunit of the SRP. The protein is Signal recognition particle 19 kDa protein of Halobacterium salinarum (strain ATCC 29341 / DSM 671 / R1).